The sequence spans 923 residues: Isoleucine--tRNA ligase (923 aa).

Positions 57 to 67 (PYANGHIHIGH) match the 'HIGH' region motif. Glutamate 560 lines the L-isoleucyl-5'-AMP pocket. The 'KMSKS' region motif lies at 601-605 (KMSKS). Lysine 604 contributes to the ATP binding site. Zn(2+) is bound by residues cysteine 895, cysteine 898, cysteine 915, and cysteine 918.

The protein belongs to the class-I aminoacyl-tRNA synthetase family. IleS type 1 subfamily. In terms of assembly, monomer. The cofactor is Zn(2+).

It is found in the cytoplasm. The catalysed reaction is tRNA(Ile) + L-isoleucine + ATP = L-isoleucyl-tRNA(Ile) + AMP + diphosphate. Functionally, catalyzes the attachment of isoleucine to tRNA(Ile). As IleRS can inadvertently accommodate and process structurally similar amino acids such as valine, to avoid such errors it has two additional distinct tRNA(Ile)-dependent editing activities. One activity is designated as 'pretransfer' editing and involves the hydrolysis of activated Val-AMP. The other activity is designated 'posttransfer' editing and involves deacylation of mischarged Val-tRNA(Ile). This is Isoleucine--tRNA ligase from Geobacter sulfurreducens (strain ATCC 51573 / DSM 12127 / PCA).